We begin with the raw amino-acid sequence, 428 residues long: Glutamate-1-semialdehyde 2,1-aminomutase (428 aa).

Lys-267 carries the N6-(pyridoxal phosphate)lysine modification.

The protein belongs to the class-III pyridoxal-phosphate-dependent aminotransferase family. HemL subfamily. In terms of assembly, homodimer. Pyridoxal 5'-phosphate serves as cofactor.

It is found in the cytoplasm. It catalyses the reaction (S)-4-amino-5-oxopentanoate = 5-aminolevulinate. Its pathway is porphyrin-containing compound metabolism; protoporphyrin-IX biosynthesis; 5-aminolevulinate from L-glutamyl-tRNA(Glu): step 2/2. This Sulfurihydrogenibium sp. (strain YO3AOP1) protein is Glutamate-1-semialdehyde 2,1-aminomutase.